We begin with the raw amino-acid sequence, 312 residues long: Beta-ketoacyl-[acyl-carrier-protein] synthase III (312 aa).

Catalysis depends on residues Cys112 and His237. The tract at residues 238-242 is ACP-binding; sequence QANIR. Residue Asn267 is part of the active site.

Belongs to the thiolase-like superfamily. FabH family. In terms of assembly, homodimer.

It localises to the cytoplasm. It carries out the reaction malonyl-[ACP] + acetyl-CoA + H(+) = 3-oxobutanoyl-[ACP] + CO2 + CoA. It functions in the pathway lipid metabolism; fatty acid biosynthesis. Catalyzes the condensation reaction of fatty acid synthesis by the addition to an acyl acceptor of two carbons from malonyl-ACP. Catalyzes the first condensation reaction which initiates fatty acid synthesis and may therefore play a role in governing the total rate of fatty acid production. Possesses both acetoacetyl-ACP synthase and acetyl transacylase activities. Its substrate specificity determines the biosynthesis of branched-chain and/or straight-chain of fatty acids. In Listeria innocua serovar 6a (strain ATCC BAA-680 / CLIP 11262), this protein is Beta-ketoacyl-[acyl-carrier-protein] synthase III.